Consider the following 216-residue polypeptide: Adenylate kinase (216 aa).

Position 10 to 15 (10 to 15) interacts with ATP; it reads GAGKGT. An NMP region spans residues 30–59; it reads STGDMFRAAMKNETALGLEAKSYIDKGELV. AMP-binding positions include Thr31, Arg36, 57-59, 85-88, and Gln92; these read ELV and GFPR. An LID region spans residues 126 to 164; it reads GRFICRTCGATYHKLFNPPKVEGTCDRCGGHEFYQREDD. Arg127 contacts ATP. Residues Cys130 and Cys133 each contribute to the Zn(2+) site. 136-137 provides a ligand contact to ATP; the sequence is TY. Positions 150 and 153 each coordinate Zn(2+). The AMP site is built by Arg161 and Arg172. Position 200 (Arg200) interacts with ATP.

This sequence belongs to the adenylate kinase family. As to quaternary structure, monomer.

Its subcellular location is the cytoplasm. The enzyme catalyses AMP + ATP = 2 ADP. It participates in purine metabolism; AMP biosynthesis via salvage pathway; AMP from ADP: step 1/1. Functionally, catalyzes the reversible transfer of the terminal phosphate group between ATP and AMP. Plays an important role in cellular energy homeostasis and in adenine nucleotide metabolism. In Enterococcus faecalis (strain ATCC 700802 / V583), this protein is Adenylate kinase.